Consider the following 478-residue polypeptide: Glycogen synthase (478 aa).

Residue K20 participates in ADP-alpha-D-glucose binding.

Belongs to the glycosyltransferase 1 family. Bacterial/plant glycogen synthase subfamily.

The enzyme catalyses [(1-&gt;4)-alpha-D-glucosyl](n) + ADP-alpha-D-glucose = [(1-&gt;4)-alpha-D-glucosyl](n+1) + ADP + H(+). It functions in the pathway glycan biosynthesis; glycogen biosynthesis. In terms of biological role, synthesizes alpha-1,4-glucan chains using ADP-glucose. This is Glycogen synthase from Cereibacter sphaeroides (strain ATCC 17023 / DSM 158 / JCM 6121 / CCUG 31486 / LMG 2827 / NBRC 12203 / NCIMB 8253 / ATH 2.4.1.) (Rhodobacter sphaeroides).